The following is a 199-amino-acid chain: Peptidyl-tRNA hydrolase (199 aa).

Position 18 (Y18) interacts with tRNA. Residue H23 is the Proton acceptor of the active site. Positions 72, 74, and 120 each coordinate tRNA.

The protein belongs to the PTH family. In terms of assembly, monomer.

It localises to the cytoplasm. The enzyme catalyses an N-acyl-L-alpha-aminoacyl-tRNA + H2O = an N-acyl-L-amino acid + a tRNA + H(+). Hydrolyzes ribosome-free peptidyl-tRNAs (with 1 or more amino acids incorporated), which drop off the ribosome during protein synthesis, or as a result of ribosome stalling. In terms of biological role, catalyzes the release of premature peptidyl moieties from peptidyl-tRNA molecules trapped in stalled 50S ribosomal subunits, and thus maintains levels of free tRNAs and 50S ribosomes. This Bifidobacterium adolescentis (strain ATCC 15703 / DSM 20083 / NCTC 11814 / E194a) protein is Peptidyl-tRNA hydrolase.